Reading from the N-terminus, the 90-residue chain is Small ribosomal subunit protein bS18 (90 aa).

It belongs to the bacterial ribosomal protein bS18 family. In terms of assembly, part of the 30S ribosomal subunit. Forms a tight heterodimer with protein bS6.

Functionally, binds as a heterodimer with protein bS6 to the central domain of the 16S rRNA, where it helps stabilize the platform of the 30S subunit. The protein is Small ribosomal subunit protein bS18 of Bordetella petrii (strain ATCC BAA-461 / DSM 12804 / CCUG 43448).